A 185-amino-acid chain; its full sequence is UPF0669 protein C6orf120 homolog (185 aa).

Residues 1 to 23 form the signal peptide; the sequence is MATPWRCALLMILASQVVILVKC. N47 carries an N-linked (GlcNAc...) asparagine glycan.

The protein belongs to the UPF0669 family.

Its subcellular location is the secreted. In terms of biological role, may be involved in induction of apoptosis in CD4(+) T-cells, but not CD8(+) T-cells or hepatocytes. This chain is UPF0669 protein C6orf120 homolog, found in Rattus norvegicus (Rat).